A 251-amino-acid chain; its full sequence is Large ribosomal subunit protein uL3 (251 aa).

Disordered stretches follow at residues 140–162 (SHRS…NKKM) and 229–251 (AAPA…EENA). An N5-methylglutamine modification is found at glutamine 151.

The protein belongs to the universal ribosomal protein uL3 family. Part of the 50S ribosomal subunit. Forms a cluster with proteins L14 and L19. Post-translationally, methylated by PrmB.

Functionally, one of the primary rRNA binding proteins, it binds directly near the 3'-end of the 23S rRNA, where it nucleates assembly of the 50S subunit. This Methylobacterium nodulans (strain LMG 21967 / CNCM I-2342 / ORS 2060) protein is Large ribosomal subunit protein uL3.